Consider the following 399-residue polypeptide: Inositol polyphosphate 1-phosphatase (399 aa).

Aspartate 54 is a binding site for Li(+). A Mg(2+)-binding site is contributed by glutamate 79. Glutamate 80 is a binding site for Li(+). 2 residues coordinate Mg(2+): aspartate 153 and isoleucine 155. Residues aspartate 156, serine 157, threonine 158, serine 267, lysine 269, glycine 289, alanine 290, lysine 293, and threonine 311 each contribute to the 1D-myo-inositol 1,4-bisphosphate site. Aspartate 316 is a Mg(2+) binding site. The residue at position 317 (serine 317) is a Phosphoserine.

This sequence belongs to the inositol monophosphatase superfamily. Monomer. The cofactor is Mg(2+). In terms of tissue distribution, ubiquitously expressed, with highest levels in pancreas and kidney.

It carries out the reaction 1D-myo-inositol 1,4-bisphosphate + H2O = 1D-myo-inositol 4-phosphate + phosphate. It catalyses the reaction 1D-myo-inositol 1,3,4-trisphosphate + H2O = 1D-myo-inositol 3,4-bisphosphate + phosphate. It functions in the pathway signal transduction; phosphatidylinositol signaling pathway. With respect to regulation, inhibited by Li(+). Functionally, mg(2+)-dependent phosphatase that catalyzes the hydrolysis of the 1-position phosphate from inositol 1,4-bisphosphate and inositol 1,3,4-trisphosphate and participates in inositol phosphate metabolism. In Homo sapiens (Human), this protein is Inositol polyphosphate 1-phosphatase.